Here is a 367-residue protein sequence, read N- to C-terminus: Putative F-box protein At4g10190 (367 aa).

Positions 3-53 (KRNIVDLPEDLVMEILARVPTVTLVRLQSTSKRWNVLIEDKRFAEQHFTNA) constitute an F-box domain.

This Arabidopsis thaliana (Mouse-ear cress) protein is Putative F-box protein At4g10190.